The following is a 318-amino-acid chain: Transaldolase (318 aa).

Lys-132 serves as the catalytic Schiff-base intermediate with substrate.

The protein belongs to the transaldolase family. Type 1 subfamily. As to quaternary structure, homodimer.

The protein resides in the cytoplasm. It catalyses the reaction D-sedoheptulose 7-phosphate + D-glyceraldehyde 3-phosphate = D-erythrose 4-phosphate + beta-D-fructose 6-phosphate. Its pathway is carbohydrate degradation; pentose phosphate pathway; D-glyceraldehyde 3-phosphate and beta-D-fructose 6-phosphate from D-ribose 5-phosphate and D-xylulose 5-phosphate (non-oxidative stage): step 2/3. In terms of biological role, transaldolase is important for the balance of metabolites in the pentose-phosphate pathway. The chain is Transaldolase from Shewanella oneidensis (strain ATCC 700550 / JCM 31522 / CIP 106686 / LMG 19005 / NCIMB 14063 / MR-1).